The primary structure comprises 209 residues: Uracil phosphoribosyltransferase (209 aa).

Residues arginine 79, arginine 104, and 131–139 each bind 5-phospho-alpha-D-ribose 1-diphosphate; that span reads DPMLATGGS. Residues isoleucine 194 and 199-201 each bind uracil; that span reads GDA. Residue aspartate 200 coordinates 5-phospho-alpha-D-ribose 1-diphosphate.

It belongs to the UPRTase family. Requires Mg(2+) as cofactor.

The enzyme catalyses UMP + diphosphate = 5-phospho-alpha-D-ribose 1-diphosphate + uracil. The protein operates within pyrimidine metabolism; UMP biosynthesis via salvage pathway; UMP from uracil: step 1/1. Allosterically activated by GTP. Its function is as follows. Catalyzes the conversion of uracil and 5-phospho-alpha-D-ribose 1-diphosphate (PRPP) to UMP and diphosphate. The polypeptide is Uracil phosphoribosyltransferase (Finegoldia magna (strain ATCC 29328 / DSM 20472 / WAL 2508) (Peptostreptococcus magnus)).